We begin with the raw amino-acid sequence, 429 residues long: Glutamate-1-semialdehyde 2,1-aminomutase 1 (429 aa).

Lysine 268 is modified (N6-(pyridoxal phosphate)lysine).

The protein belongs to the class-III pyridoxal-phosphate-dependent aminotransferase family. HemL subfamily. As to quaternary structure, homodimer. It depends on pyridoxal 5'-phosphate as a cofactor.

The protein localises to the cytoplasm. It carries out the reaction (S)-4-amino-5-oxopentanoate = 5-aminolevulinate. The protein operates within porphyrin-containing compound metabolism; protoporphyrin-IX biosynthesis; 5-aminolevulinate from L-glutamyl-tRNA(Glu): step 2/2. This is Glutamate-1-semialdehyde 2,1-aminomutase 1 from Listeria innocua serovar 6a (strain ATCC BAA-680 / CLIP 11262).